The chain runs to 499 residues: ADP,ATP carrier protein 5 (499 aa).

The next 11 membrane-spanning stretches (helical) occupy residues 25–45 (LGKF…QNVL), 61–81 (IAGF…VIIY), 93–113 (IFYY…FVIY), 148–168 (YIVY…LLFW), 183–203 (FYTL…FLMM), 223–243 (ITLV…CCLL), 286–306 (LWLL…VEAV), 327–347 (LYIL…NNIM), 356–376 (AVIS…LIVF), 380–400 (ILSL…VSIG), and 468–488 (LISP…IYAV).

The protein belongs to the ADP/ATP translocase tlc family.

It is found in the cell membrane. Provides the rickettsial cell with host ATP in exchange for rickettsial ADP. This is an obligate exchange system. This energy acquiring activity is an important component of rickettsial parasitism. This chain is ADP,ATP carrier protein 5 (tlcE), found in Rickettsia conorii (strain ATCC VR-613 / Malish 7).